We begin with the raw amino-acid sequence, 406 residues long: Multifunctional CCA protein (406 aa).

Positions 8 and 11 each coordinate ATP. Residues G8 and R11 each coordinate CTP. Mg(2+)-binding residues include D21 and D23. Residues R91, R137, and R140 each contribute to the ATP site. Residues R91, R137, and R140 each coordinate CTP. Residues 228–329 form the HD domain; that stretch reads TGIHTLMVAE…IKILNKFDVW (102 aa).

This sequence belongs to the tRNA nucleotidyltransferase/poly(A) polymerase family. Bacterial CCA-adding enzyme type 1 subfamily. As to quaternary structure, monomer. Can also form homodimers and oligomers. Mg(2+) is required as a cofactor. It depends on Ni(2+) as a cofactor.

The enzyme catalyses a tRNA precursor + 2 CTP + ATP = a tRNA with a 3' CCA end + 3 diphosphate. The catalysed reaction is a tRNA with a 3' CCA end + 2 CTP + ATP = a tRNA with a 3' CCACCA end + 3 diphosphate. In terms of biological role, catalyzes the addition and repair of the essential 3'-terminal CCA sequence in tRNAs without using a nucleic acid template. Adds these three nucleotides in the order of C, C, and A to the tRNA nucleotide-73, using CTP and ATP as substrates and producing inorganic pyrophosphate. tRNA 3'-terminal CCA addition is required both for tRNA processing and repair. Also involved in tRNA surveillance by mediating tandem CCA addition to generate a CCACCA at the 3' terminus of unstable tRNAs. While stable tRNAs receive only 3'-terminal CCA, unstable tRNAs are marked with CCACCA and rapidly degraded. This is Multifunctional CCA protein from Vibrio parahaemolyticus serotype O3:K6 (strain RIMD 2210633).